The chain runs to 393 residues: MQTFGEELESLRAAGLFRSMRLVEGEQSSRIILDGREVLLLCSNNYLGLADHPLLKEAAIRAVERFGVGSGAARLVSGNMELHFRLEERIAAFKGTEAALVFNSGYAANTGIISAIAGRGDLIFSDRLNHASIVDGALLSRAKVIRYSHNDMVALRRLLEENRSTSGRRIIVTDGVFSMDGDLAELAELAALKEEFGALLMVDDAHGTGVLGEHGRGSAELCGVMDRVDIHMGTLGKALGSFGAYAAASKEIIDYLVNRARSFIFSTSLPPAVLAASIAAFDLVDSQAGADLRKGLAANSTRFKDGLENAGFNTMGSETQIVPAFVGGAAETMKFSRKLLDQGIFVQGIRPPTVPVGSCRLRCTLMATHSQADVDRAVSAIAHVGRKLGVTGC.

Position 18 (Arg-18) interacts with substrate. 105–106 (GY) contacts pyridoxal 5'-phosphate. Substrate is bound at residue His-130. Pyridoxal 5'-phosphate is bound by residues Ser-178, His-206, and Thr-234. At Lys-237 the chain carries N6-(pyridoxal phosphate)lysine. Residue Thr-353 coordinates substrate.

This sequence belongs to the class-II pyridoxal-phosphate-dependent aminotransferase family. BioF subfamily. As to quaternary structure, homodimer. Pyridoxal 5'-phosphate serves as cofactor.

The catalysed reaction is 6-carboxyhexanoyl-[ACP] + L-alanine + H(+) = (8S)-8-amino-7-oxononanoate + holo-[ACP] + CO2. The protein operates within cofactor biosynthesis; biotin biosynthesis. In terms of biological role, catalyzes the decarboxylative condensation of pimeloyl-[acyl-carrier protein] and L-alanine to produce 8-amino-7-oxononanoate (AON), [acyl-carrier protein], and carbon dioxide. The sequence is that of 8-amino-7-oxononanoate synthase from Geotalea daltonii (strain DSM 22248 / JCM 15807 / FRC-32) (Geobacter daltonii).